The sequence spans 644 residues: Protein cueball (644 aa).

An N-terminal signal peptide occupies residues 1–26 (MIRIRFGMDVLLVVLLATCLLTPAHG). Residues 27 to 531 (TPLEWDFAVT…VCLTPRVWTS (505 aa)) lie on the Extracellular side of the membrane. N82 and N108 each carry an N-linked (GlcNAc...) asparagine glycan. LDL-receptor class B repeat units lie at residues 121–166 (MNLF…DVCR), 167–211 (RKLY…DQLS), and 212–257 (DRLF…TNDA). N-linked (GlcNAc...) asparagine glycans are attached at residues N175 and N190. N313 carries an N-linked (GlcNAc...) asparagine glycan. 2 consecutive EGF-like domains span residues 398–430 (EIRE…FTGE) and 433–471 (ELSV…ARCE). Intrachain disulfides connect C402-C411, C406-C421, C437-C447, C441-C459, and C461-C470. N473 and N508 each carry an N-linked (GlcNAc...) asparagine glycan. The chain crosses the membrane as a helical span at residues 532–552 (SVIIILVVGIVSSLLLVAVIV). Topologically, residues 553 to 644 (HGIRRLYKPK…LIHNMEDDLY (92 aa)) are cytoplasmic.

The protein belongs to the cueball family.

It is found in the cell membrane. In terms of biological role, has a role in spermatogenesis and oogenesis. The sequence is that of Protein cueball from Drosophila simulans (Fruit fly).